The chain runs to 401 residues: O-methyltransferase mfmE (401 aa).

Residues 243-244 (GG) and Asp268 contribute to the S-adenosyl-L-methionine site. His308 serves as the catalytic Proton acceptor.

It belongs to the class I-like SAM-binding methyltransferase superfamily. Cation-independent O-methyltransferase family. COMT subfamily.

Its pathway is secondary metabolite biosynthesis; terpenoid biosynthesis. Functionally, O-methyltransferase; part of the gene cluster that mediates the biosynthesis of the phthalide-terpenoid hybrid 11'-O-desmethylfendlerol. Within the pathway, mfmE catalyzes the 7-O-methylation of the phthalide 5,7-dihydroxy-4-(hydroxymethyl)-6-methylphthalide to yield 5-hydroxy-4-(hydroxymethyl)-7-methoxy-6-methylphthalide. The biosynthesis of 11'-O-desmethylfendlerol begins with the NR-PKS mfmB that forms 3,5-dimethylorsellinic acid (DMOA), which is then transformed into the phthalide 5,7-dihydroxy-4-(hydroxymethyl)-6-methylphthalide by the cytochrome P450 monooxygenase mfmA and the hydrolase mfmC. Subsequently, the methyltransferase mfmE catalyzes 7-O-methylation to yield 5-hydroxy-4-(hydroxymethyl)-7-methoxy-6-methylphthalide, which undergoes C-3 hydroxylation by the cytochrome P450 monooxygenase mfmF. The resultant cyclopolic acid (2,5-dihydroxy-4-(hydroxymethyl)-7-methoxy-6-methylphthalide) is then farnesylated by the DMATS-type prenyltransferase mfmD to afford 5-O-farnesylcyclopolic acid. Finally, the Pyr4-family terpene cyclase mfmH cyclizes the farnesyl moiety of 5-O-farnesylcyclopolic acid into a drimane-like structure, thus completing the biosynthesis of 11'-O-desmethylfendlerol. In Annulohypoxylon moriforme (Filamentous fungus), this protein is O-methyltransferase mfmE.